Consider the following 117-residue polypeptide: MFSIIIIASVILLITTVVMFLASILSKKALIDREKSSPFECGFDPKSSSRLPFSLRFFLITIIFLIFDVEIALILPMIIILKYSNIMIWTITSIIFILILLIGLYHEWNQGMLNWSN.

3 consecutive transmembrane segments (helical) span residues 4 to 24, 60 to 80, and 86 to 106; these read IIII…LASI, ITII…MIII, and IMIW…GLYH.

Belongs to the complex I subunit 3 family.

It localises to the mitochondrion membrane. It carries out the reaction a ubiquinone + NADH + 5 H(+)(in) = a ubiquinol + NAD(+) + 4 H(+)(out). In terms of biological role, core subunit of the mitochondrial membrane respiratory chain NADH dehydrogenase (Complex I) that is believed to belong to the minimal assembly required for catalysis. Complex I functions in the transfer of electrons from NADH to the respiratory chain. The immediate electron acceptor for the enzyme is believed to be ubiquinone. The sequence is that of NADH-ubiquinone oxidoreductase chain 3 (mt:ND3) from Drosophila yakuba (Fruit fly).